The following is a 147-amino-acid chain: Nucleoside diphosphate kinase (147 aa).

Positions 9, 57, 85, 91, 102, and 112 each coordinate ATP. His115 (pros-phosphohistidine intermediate) is an active-site residue.

This sequence belongs to the NDK family. Homotetramer. Mg(2+) serves as cofactor.

The protein resides in the cytoplasm. It carries out the reaction a 2'-deoxyribonucleoside 5'-diphosphate + ATP = a 2'-deoxyribonucleoside 5'-triphosphate + ADP. The catalysed reaction is a ribonucleoside 5'-diphosphate + ATP = a ribonucleoside 5'-triphosphate + ADP. Major role in the synthesis of nucleoside triphosphates other than ATP. The ATP gamma phosphate is transferred to the NDP beta phosphate via a ping-pong mechanism, using a phosphorylated active-site intermediate. This is Nucleoside diphosphate kinase from Listeria innocua serovar 6a (strain ATCC BAA-680 / CLIP 11262).